The primary structure comprises 324 residues: Serine racemase (324 aa).

Residues Ser-32, Lys-51, and Thr-52 each contribute to the ATP site. The active-site Proton acceptor is Lys-56. At Lys-56 the chain carries N6-(pyridoxal phosphate)lysine. Ca(2+) is bound at residue Thr-78. Ser-81 (proton acceptor) is an active-site residue. Asn-83 lines the pyridoxal 5'-phosphate pocket. ATP-binding residues include Gln-86 and Tyr-118. Asp-175 provides a ligand contact to Mg(2+). Pyridoxal 5'-phosphate contacts are provided by Gly-182, Gly-183, Gly-184, and Gly-185. Ca(2+) contacts are provided by Glu-207, Ala-211, and Asp-213. 3 residues coordinate Mg(2+): Glu-207, Ala-211, and Asp-213. Mn(2+) is bound by residues Glu-207, Ala-211, and Asp-213. Lys-277 is an ATP binding site. Ser-310 contributes to the pyridoxal 5'-phosphate binding site. Asn-313 provides a ligand contact to ATP.

The protein belongs to the serine/threonine dehydratase family. Homodimer. Requires Mg(2+) as cofactor. Mn(2+) serves as cofactor. Ca(2+) is required as a cofactor. It depends on pyridoxal 5'-phosphate as a cofactor.

The enzyme catalyses L-serine = D-serine. The catalysed reaction is L-serine = pyruvate + NH4(+). It carries out the reaction D-serine = pyruvate + NH4(+). Its function is as follows. Catalyzes the synthesis of D-serine from L-serine. Has dehydratase activity towards both L-serine and D-serine. The polypeptide is Serine racemase (srr) (Dictyostelium discoideum (Social amoeba)).